A 153-amino-acid polypeptide reads, in one-letter code: ATP synthase subunit b' (153 aa).

Residues 20-40 form a helical membrane-spanning segment; the sequence is TLPLMAAQVVLLTFILNALFF.

The protein belongs to the ATPase B chain family. In terms of assembly, F-type ATPases have 2 components, F(1) - the catalytic core - and F(0) - the membrane proton channel. F(1) has five subunits: alpha(3), beta(3), gamma(1), delta(1), epsilon(1). F(0) has four main subunits: a(1), b(1), b'(1) and c(10-14). The alpha and beta chains form an alternating ring which encloses part of the gamma chain. F(1) is attached to F(0) by a central stalk formed by the gamma and epsilon chains, while a peripheral stalk is formed by the delta, b and b' chains.

It is found in the cellular thylakoid membrane. F(1)F(0) ATP synthase produces ATP from ADP in the presence of a proton or sodium gradient. F-type ATPases consist of two structural domains, F(1) containing the extramembraneous catalytic core and F(0) containing the membrane proton channel, linked together by a central stalk and a peripheral stalk. During catalysis, ATP synthesis in the catalytic domain of F(1) is coupled via a rotary mechanism of the central stalk subunits to proton translocation. In terms of biological role, component of the F(0) channel, it forms part of the peripheral stalk, linking F(1) to F(0). The b'-subunit is a diverged and duplicated form of b found in plants and photosynthetic bacteria. This chain is ATP synthase subunit b', found in Prochlorococcus marinus (strain SARG / CCMP1375 / SS120).